A 97-amino-acid polypeptide reads, in one-letter code: Large ribosomal subunit protein bL27 (97 aa).

Residues 14-36 are disordered; it reads HKKGGGSTSNGRDSQAKRLGAKA.

The protein belongs to the bacterial ribosomal protein bL27 family.

In Streptococcus sanguinis (strain SK36), this protein is Large ribosomal subunit protein bL27.